Consider the following 243-residue polypeptide: MILFPAIDLKDGQCVRLKLGDMDQATVYNEDPAAQAKAFEDQGFEWLHVVDLNGAFAGESVNGKAVEAILKATKNPVQLGGGIRTLQHIENWLSKGLRRVILGTVAVRDPALVIEACKAFPGQVAVGIDAKGGYVAVEGWAEASELGVIELAKKFEGAGVAAIIYTDIDRDGVLAGINWDSTLGLADSVSIPVIASGGLASMDDIKRLAAPDARKLEGAISGRALYDGRIDPAEALSLLRAAA.

The Proton acceptor role is filled by Asp8. Asp129 acts as the Proton donor in catalysis.

It belongs to the HisA/HisF family.

Its subcellular location is the cytoplasm. It catalyses the reaction 1-(5-phospho-beta-D-ribosyl)-5-[(5-phospho-beta-D-ribosylamino)methylideneamino]imidazole-4-carboxamide = 5-[(5-phospho-1-deoxy-D-ribulos-1-ylimino)methylamino]-1-(5-phospho-beta-D-ribosyl)imidazole-4-carboxamide. Its pathway is amino-acid biosynthesis; L-histidine biosynthesis; L-histidine from 5-phospho-alpha-D-ribose 1-diphosphate: step 4/9. The sequence is that of 1-(5-phosphoribosyl)-5-[(5-phosphoribosylamino)methylideneamino] imidazole-4-carboxamide isomerase from Brucella anthropi (strain ATCC 49188 / DSM 6882 / CCUG 24695 / JCM 21032 / LMG 3331 / NBRC 15819 / NCTC 12168 / Alc 37) (Ochrobactrum anthropi).